A 324-amino-acid polypeptide reads, in one-letter code: UDP-N-acetylenolpyruvoylglucosamine reductase (324 aa).

Residues 36 to 211 form the FAD-binding PCMH-type domain; it reads FRAGGLAELM…AEDKAKIRND (176 aa). Arg-183 is a catalytic residue. Ser-232 (proton donor) is an active-site residue. Residue Glu-302 is part of the active site.

Belongs to the MurB family. Requires FAD as cofactor.

It localises to the cytoplasm. The enzyme catalyses UDP-N-acetyl-alpha-D-muramate + NADP(+) = UDP-N-acetyl-3-O-(1-carboxyvinyl)-alpha-D-glucosamine + NADPH + H(+). Its pathway is cell wall biogenesis; peptidoglycan biosynthesis. In terms of biological role, cell wall formation. This Sinorhizobium medicae (strain WSM419) (Ensifer medicae) protein is UDP-N-acetylenolpyruvoylglucosamine reductase.